A 108-amino-acid polypeptide reads, in one-letter code: L-rhamnose mutarotase (108 aa).

Tyr18 serves as a coordination point for substrate. His22 (proton donor) is an active-site residue. Residues Tyr41 and 76–77 contribute to the substrate site; that span reads WW.

The protein belongs to the rhamnose mutarotase family. Homodimer.

Its subcellular location is the cytoplasm. The catalysed reaction is alpha-L-rhamnose = beta-L-rhamnose. Its pathway is carbohydrate metabolism; L-rhamnose metabolism. In terms of biological role, involved in the anomeric conversion of L-rhamnose. This chain is L-rhamnose mutarotase, found in Paraburkholderia phymatum (strain DSM 17167 / CIP 108236 / LMG 21445 / STM815) (Burkholderia phymatum).